We begin with the raw amino-acid sequence, 686 residues long: Secretin GspD 2 (686 aa).

Positions 1-40 are cleaved as a signal peptide; the sequence is MFWRDITLSVWRKKTTGLKTKKRLLPLVLAAALCSSPVWA. Residues 41–140 are N0, contacts GspC2; the sequence is EEATFTANFK…VGEGSDNYAG (100 aa). Positions 142–206 are N1; it reads EMVTKVVPVR…EVIQRVDHAG (65 aa). The N2 stretch occupies residues 207–279; it reads NRTEEVIPLD…LIRRLDSEME (73 aa). Positions 282 to 357 are N3; it reads GNSQVFYLKY…SLQSVIEQLD (76 aa). The interval 360–627 is secretin; sequence RAQVHVEALI…VFIRPTILRD (268 aa). The cap gate stretch occupies residues 414–433; sequence PQKGSTVISENGATTINPDT. Positions 629–686 are s domain, contacts AspS2; the sequence is MAADGVSQRKYNYMRAEQIYRDEQGLSLMPHTAQPVLPAQNQALPPEVRAFLNAGRTR.

It belongs to the bacterial secretin family. GSP D subfamily. In terms of assembly, forms a cylindrical channel with 15 subunits, each of which interacts with the surrounding pilotin AspS2 proteins (also called GspS-beta). Interacts with inner cell membrane protein GspC2 in the periplasm. Forms multimers in the outer membrane. The isolated N0 domain forms dimers that self-assemble into rings.

The protein localises to the cell outer membrane. Functionally, part of a type II secretion system (T2SS, formerly general secretion pathway, GSP) for the export of folded proteins across the outer membrane. This subunit forms the outer membrane channel. The chain is Secretin GspD 2 (gspD2) from Escherichia coli O78:H11 (strain H10407 / ETEC).